Consider the following 305-residue polypeptide: Calponin-2 (305 aa).

Residue Ser-2 is modified to N-acetylserine. An N6-acetyllysine mark is found at Lys-8 and Lys-25. Positions 28–132 (PQKEAELRSW…SLLALAGKAK (105 aa)) constitute a Calponin-homology (CH) domain. Position 138 is a phosphoserine (Ser-138). 3 Calponin-like repeats span residues 166 to 191 (IGLQ…RHLY), 206 to 231 (ISLQ…RHIY), and 245 to 269 (MSLQ…RQIY).

This sequence belongs to the calponin family. Smooth muscle, and tissues containing significant amounts of smooth muscle.

Functionally, thin filament-associated protein that is implicated in the regulation and modulation of smooth muscle contraction. It is capable of binding to actin, calmodulin and tropomyosin. The interaction of calponin with actin inhibits the actomyosin Mg-ATPase activity. This Mus musculus (Mouse) protein is Calponin-2 (Cnn2).